A 348-amino-acid polypeptide reads, in one-letter code: MENLDQIVSEAQVAFAAISDPDALEQVKARFLGKSGQITELLKGLGKLPPEEKKTAGAAINVAKTAVETALNERREAIRKAALDARLAEEALDVTLPGRAEARGGLHPVTRTLERIESLFASIGFEVADGPEIEEDFYNFTAMNTPEDHPARSMHDTFYLQNSDGTLADKVLLRTHTSPIQARYMQAHVKRYGQLGKMPEIRIIAPGRVYRVDSDATHSPMFHQVEGLWVGEGVSFADLKGVIANFLKSFFETDDLTVRFRPSFFPFTEPSAEIDVAFMSGALKGRWLEIAGCGMVHPNVLRIAGIDPEKYTGFAFGFGQDRLTMLRYGINDLRLFFEGDLRFLRQFN.

Residue Glu-269 coordinates Mg(2+).

This sequence belongs to the class-II aminoacyl-tRNA synthetase family. Phe-tRNA synthetase alpha subunit type 1 subfamily. Tetramer of two alpha and two beta subunits. Mg(2+) serves as cofactor.

The protein resides in the cytoplasm. The catalysed reaction is tRNA(Phe) + L-phenylalanine + ATP = L-phenylalanyl-tRNA(Phe) + AMP + diphosphate + H(+). The polypeptide is Phenylalanine--tRNA ligase alpha subunit (Dechloromonas aromatica (strain RCB)).